Reading from the N-terminus, the 500-residue chain is Probable cytosol aminopeptidase (500 aa).

Mn(2+) is bound by residues Lys-268 and Asp-273. The active site involves Lys-280. Asp-291, Asp-350, and Glu-352 together coordinate Mn(2+). Arg-354 is an active-site residue.

This sequence belongs to the peptidase M17 family. Requires Mn(2+) as cofactor.

It localises to the cytoplasm. It carries out the reaction Release of an N-terminal amino acid, Xaa-|-Yaa-, in which Xaa is preferably Leu, but may be other amino acids including Pro although not Arg or Lys, and Yaa may be Pro. Amino acid amides and methyl esters are also readily hydrolyzed, but rates on arylamides are exceedingly low.. The catalysed reaction is Release of an N-terminal amino acid, preferentially leucine, but not glutamic or aspartic acids.. Presumably involved in the processing and regular turnover of intracellular proteins. Catalyzes the removal of unsubstituted N-terminal amino acids from various peptides. The chain is Probable cytosol aminopeptidase from Aromatoleum aromaticum (strain DSM 19018 / LMG 30748 / EbN1) (Azoarcus sp. (strain EbN1)).